Here is a 73-residue protein sequence, read N- to C-terminus: Homeodomain-only protein (73 aa).

The segment at residues 3–62 is a DNA-binding region (homeobox; degenerate); the sequence is TEKSVTPTEEQLEILEYNFCKVNKHPDPTTLCLIAAETGLSEEQTLKWFKQRLAEWRKSE.

The protein resides in the nucleus. The protein localises to the cytoplasm. Its function is as follows. Atypical homeodomain protein which does not bind DNA and is required to modulate cardiac growth and development. May act via an interaction with SRF, leading to modulate the expression of SRF-dependent cardiac-specific genes and cardiac development. May act as a co-chaperone for HSPA1A and HSPA1B chaperone proteins and assist in chaperone-mediated protein refolding. In Gallus gallus (Chicken), this protein is Homeodomain-only protein (HOPX).